The primary structure comprises 492 residues: Catalase (492 aa).

Active-site residues include H65 and N138. Y348 serves as a coordination point for heme.

This sequence belongs to the catalase family. As to quaternary structure, homotetramer. Heme serves as cofactor. As to expression, in stems, leaves, roots and developing fruits.

Its subcellular location is the cytoplasm. The protein resides in the cytosol. The protein localises to the peroxisome matrix. The catalysed reaction is 2 H2O2 = O2 + 2 H2O. Its function is as follows. Catalyzes the degradation of hydrogen peroxide (H(2)O(2)) generated by peroxisomal oxidases to water and oxygen, thereby protecting cells from the toxic effects of hydrogen peroxide. The protein is Catalase (CAT) of Capsicum annuum (Capsicum pepper).